A 75-amino-acid chain; its full sequence is Small ribosomal subunit protein bS18 (75 aa).

This sequence belongs to the bacterial ribosomal protein bS18 family. As to quaternary structure, part of the 30S ribosomal subunit. Forms a tight heterodimer with protein bS6.

Its function is as follows. Binds as a heterodimer with protein bS6 to the central domain of the 16S rRNA, where it helps stabilize the platform of the 30S subunit. The polypeptide is Small ribosomal subunit protein bS18 (Klebsiella pneumoniae (strain 342)).